Consider the following 210-residue polypeptide: Large ribosomal subunit protein uL4 (210 aa).

Residues 41–51 are compositionally biased toward polar residues; the sequence is ANARQGTQSTK. 2 disordered regions span residues 41–60 and 67–98; these read ANAR…QGSS and KGTG…DFSK.

Belongs to the universal ribosomal protein uL4 family. Part of the 50S ribosomal subunit.

Functionally, one of the primary rRNA binding proteins, this protein initially binds near the 5'-end of the 23S rRNA. It is important during the early stages of 50S assembly. It makes multiple contacts with different domains of the 23S rRNA in the assembled 50S subunit and ribosome. In terms of biological role, forms part of the polypeptide exit tunnel. The protein is Large ribosomal subunit protein uL4 of Dehalococcoides mccartyi (strain ATCC BAA-2100 / JCM 16839 / KCTC 5957 / BAV1).